The following is a 338-amino-acid chain: RNA 3'-terminal phosphate cyclase (338 aa).

ATP-binding positions include glutamine 103 and 283-287 (YLADQ). Catalysis depends on histidine 308, which acts as the Tele-AMP-histidine intermediate.

Belongs to the RNA 3'-terminal cyclase family. Type 1 subfamily.

It localises to the cytoplasm. The catalysed reaction is a 3'-end 3'-phospho-ribonucleotide-RNA + ATP = a 3'-end 2',3'-cyclophospho-ribonucleotide-RNA + AMP + diphosphate. Its function is as follows. Catalyzes the conversion of 3'-phosphate to a 2',3'-cyclic phosphodiester at the end of RNA. The mechanism of action of the enzyme occurs in 3 steps: (A) adenylation of the enzyme by ATP; (B) transfer of adenylate to an RNA-N3'P to produce RNA-N3'PP5'A; (C) and attack of the adjacent 2'-hydroxyl on the 3'-phosphorus in the diester linkage to produce the cyclic end product. The biological role of this enzyme is unknown but it is likely to function in some aspects of cellular RNA processing. The protein is RNA 3'-terminal phosphate cyclase of Shigella boydii serotype 4 (strain Sb227).